Consider the following 985-residue polypeptide: Exocyst complex component 4 (985 aa).

The stretch at 36-70 forms a coiled coil; that stretch reads SETTEERQKEKQKIEAEFKRSDLRLNELVSRHDQQ. 5 positions are modified to phosphoserine: Ser-235, Ser-456, Ser-459, Ser-682, and Ser-686. The disordered stretch occupies residues 434-480; the sequence is DKSSHVGTSNNSDAFKEHRRNASDASVDDNLAGQLGGSGKGSTSGLF.

This sequence belongs to the SEC8 family. As to quaternary structure, the exocyst complex is composed of Sec3/Exoc1, Sec5/Exoc2, Sec6/Exoc3, Sec8/Exoc4, Sec10/Exoc5, Sec15/Exoc6, exo70/Exoc7 and Exo84/Exoc8. As to expression, abundant in the embryonic and larval glutamatergic neuromuscular junctions (NMJs), pre and postsynaptically.

Component of the exocyst complex involved in the docking of exocytic vesicles with fusion sites on the plasma membrane. Involved in regulation of synaptic microtubule formation, and also regulation of synaptic growth and glutamate receptor trafficking. Does not appear to be required for basal neurotransmission. The chain is Exocyst complex component 4 from Drosophila melanogaster (Fruit fly).